A 329-amino-acid chain; its full sequence is DNA-directed RNA polymerase subunit alpha (329 aa).

The alpha N-terminal domain (alpha-NTD) stretch occupies residues 1–235 (MLGSVTDFLK…EQLEAFVDLR (235 aa)). The interval 249–329 (FDPILLRPVD…NWPPASIADE (81 aa)) is alpha C-terminal domain (alpha-CTD).

It belongs to the RNA polymerase alpha chain family. Homodimer. The RNAP catalytic core consists of 2 alpha, 1 beta, 1 beta' and 1 omega subunit. When a sigma factor is associated with the core the holoenzyme is formed, which can initiate transcription.

The catalysed reaction is RNA(n) + a ribonucleoside 5'-triphosphate = RNA(n+1) + diphosphate. Functionally, DNA-dependent RNA polymerase catalyzes the transcription of DNA into RNA using the four ribonucleoside triphosphates as substrates. The chain is DNA-directed RNA polymerase subunit alpha from Aeromonas hydrophila subsp. hydrophila (strain ATCC 7966 / DSM 30187 / BCRC 13018 / CCUG 14551 / JCM 1027 / KCTC 2358 / NCIMB 9240 / NCTC 8049).